The chain runs to 951 residues: MAATGNEEQTLLPDIEEEAEGMEREMESEDDEEEGMGVEHSEEEDEEDTSEDERENEAEIQRLEEQLSINAFDYNCHVDLIKLLRQEGKLHRLRKARQKMSELFPLTEEIWLDWLKDEIRITEDESDREKVYELFERAIKDYVCPEIWLEYVQYSIGGMGAQGGIERVRSIFERALTAVGLHMTKGASIWEAYREFEIVILSTVQPPPGTVPSQEQQELLSAQLERIHTLFRRQLAVPLMDMEGTYAEYSDWADDGVPETVTHQYRRALQQMEKGKPYEEALLVSEPPKLAEYQSYIDFEIKEGDPARVQIIFERALAENCLVPDLWIKYTTYLDRQLKIKDLVLSAHERAVRNCPWTMGLWKSYLLALERHGADHQTVKDVFEKALNAGFIQATDYVEIWQSYLDYLRRRVDFSKEWSRELDELRAAFSRSLEYLKQDVEERFSESGDLSCTLMQIWARIEALHCKNMQKARELWDSIMTKGNAKYANMWLEYYNLERSYGDAAHCRKALHRAVQCTSDYPEHVCDVLLNFERVEGSLEDWDAAVQKTETKLNRVCEQRARVAEKEALHARQEEEKAEQRRKVKADKKAQKKGQKANRTGDKRKAEDDDEEEWGEEAELPSKRLRGEDDFDSTVTEELMETESGLFGRRAPPARKTEPPGFRKNQQGAPEPQRQPHDMPKEQRKDENCVFVSNLTFNMEDPEGKLRTLFQGCGTIQQVRPVFTAKGTFRGYCYVQFEDRLAVPEALKMDRQEVDGRPMYVSPCVDKNKNPDFKVFKYKTSMEKHKIFISGLPYSATKETLEDLCKEHGTIRAIRIVTNRSGKSKGLAYVEFEDEAQASQAVLKMDGTMLENFTLSVAISNPPGRRMKDEAAPSRFLGAAMPRQLQGARGKGRTQISLLPRSLYRQSTPDAKAENGTISAPHATVTDGETSLDTQTKSLSNEDFARMLLKK.

A disordered region spans residues 1–58 (MAATGNEEQTLLPDIEEEAEGMEREMESEDDEEEGMGVEHSEEEDEEDTSEDERENEA). The segment covering 14–56 (DIEEEAEGMEREMESEDDEEEGMGVEHSEEEDEEDTSEDEREN) has biased composition (acidic residues). 8 HAT repeats span residues 88–120 (GKLHRLRKARQKMSELFPLTEEIWLDWLKDEIR), 126–157 (SDREKVYELFERAIKDYVCPEIWLEYVQYSIG), 163–199 (GGIERVRSIFERALTAVGLHMTKGASIWEAYREFEIV), 222–255 (AQLERIHTLFRRQLAVPLMDMEGTYAEYSDWADD), 304–336 (GDPARVQIIFERALAENCLVPDLWIKYTTYLDR), 339–371 (KIKDLVLSAHERAVRNCPWTMGLWKSYLLALER), 374–410 (ADHQTVKDVFEKALNAGFIQATDYVEIWQSYLDYLRR), and 467–500 (KNMQKARELWDSIMTKGNAKYANMWLEYYNLERS). Positions 517 to 941 (CTSDYPEHVC…LDTQTKSLSN (425 aa)) are necessary and sufficient for U6 snRNA binding. Positions 533–593 (ERVEGSLEDW…VKADKKAQKK (61 aa)) form a coiled coil. Residues 567–581 (EALHARQEEEKAEQR) are compositionally biased toward basic and acidic residues. The segment at 567–686 (EALHARQEEE…HDMPKEQRKD (120 aa)) is disordered. Over residues 582-596 (RKVKADKKAQKKGQK) the composition is skewed to basic residues. Positions 608 to 619 (DDDEEEWGEEAE) are enriched in acidic residues. Over residues 674 to 686 (RQPHDMPKEQRKD) the composition is skewed to basic and acidic residues. RRM domains follow at residues 688 to 766 (NCVF…PCVD) and 785 to 862 (HKIF…ISNP). The interval 905-938 (RQSTPDAKAENGTISAPHATVTDGETSLDTQTKS) is disordered. Residues 927 to 938 (DGETSLDTQTKS) show a composition bias toward polar residues.

The protein resides in the nucleus. Its subcellular location is the nucleoplasm. It is found in the cajal body. It localises to the nucleus speckle. The protein localises to the cytoplasm. Its function is as follows. U6 snRNP-binding protein that functions as a recycling factor of the splicing machinery. Promotes the initial reassembly of U4 and U6 snRNPs following their ejection from the spliceosome during its maturation. May also function as a substrate targeting factor for deubiquitinases and mediate the deubiquitination of components of the spliceosome and histones. The protein is Spliceosome associated factor 3, U4/U6 recycling protein of Danio rerio (Zebrafish).